A 141-amino-acid polypeptide reads, in one-letter code: uncharacterized protein (141 aa).

The segment covering 1–39 (MNNNNNNNNNNNNNNNNNNNNNNNNNSYDSNHSSSSYTS) has biased composition (low complexity). A disordered region spans residues 1–48 (MNNNNNNNNNNNNNNNNNNNNNNNNNSYDSNHSSSSYTSENQNREQQF). Residues 109–129 (FFCKIILVFICLVAIYSLVVI) traverse the membrane as a helical segment.

The protein resides in the membrane. This is an uncharacterized protein from Dictyostelium discoideum (Social amoeba).